Here is a 222-residue protein sequence, read N- to C-terminus: MIF4G domain-containing protein B (222 aa).

The region spanning 3-205 (NSSKEDYKIQ…LEILEFRAGG (203 aa)) is the MIF4G domain.

It belongs to the MIF4GD family. In terms of assembly, interacts with eif4g1, eif4g2 and slbp; probably tethered by SLBP to the 3'-end of mRNAs ending with the histone stem-loop, it also interacts with eif4g1 which is bound to their 5'-end.

It is found in the cytoplasm. It localises to the nucleus. Functionally, functions in replication-dependent translation of histone mRNAs which differ from other eukaryotic mRNAs in that they do not end with a poly-A tail but a stem-loop. May participate in circularizing those mRNAs specifically enhancing their translation. This Danio rerio (Zebrafish) protein is MIF4G domain-containing protein B (mif4gdb).